An 89-amino-acid polypeptide reads, in one-letter code: UPF0335 protein Nham_1221 (89 aa).

This sequence belongs to the UPF0335 family.

This is UPF0335 protein Nham_1221 from Nitrobacter hamburgensis (strain DSM 10229 / NCIMB 13809 / X14).